The sequence spans 118 residues: Large ribosomal subunit protein bL20 (118 aa).

The protein belongs to the bacterial ribosomal protein bL20 family.

Its function is as follows. Binds directly to 23S ribosomal RNA and is necessary for the in vitro assembly process of the 50S ribosomal subunit. It is not involved in the protein synthesizing functions of that subunit. This chain is Large ribosomal subunit protein bL20, found in Shigella dysenteriae serotype 1 (strain Sd197).